Consider the following 179-residue polypeptide: Inner membrane-spanning protein YciB (179 aa).

The next 5 membrane-spanning stretches (helical) occupy residues 22–42 (IYAA…YSWV), 50–70 (MALI…FFHN), 76–96 (WKVT…QWVM), 121–141 (LAWA…AFWL), and 149–169 (FKVF…GVYI).

Belongs to the YciB family.

Its subcellular location is the cell inner membrane. In terms of biological role, plays a role in cell envelope biogenesis, maintenance of cell envelope integrity and membrane homeostasis. This chain is Inner membrane-spanning protein YciB, found in Citrobacter koseri (strain ATCC BAA-895 / CDC 4225-83 / SGSC4696).